Consider the following 136-residue polypeptide: Histone H3.1t (136 aa).

The segment at 1 to 43 (MARTKQTARKSTGGKAPRKQLATKVARKSAPATGGVKKPHRYR) is disordered. Arginine 3 carries the asymmetric dimethylarginine; by PRMT6; alternate modification. Position 3 is a citrulline; alternate (arginine 3). Phosphothreonine; by HASPIN is present on threonine 4. Lysine 5 is subject to Allysine; alternate. An N6,N6,N6-trimethyllysine; alternate modification is found at lysine 5. At lysine 5 the chain carries N6,N6-dimethyllysine; alternate. Lysine 5 carries the N6-(2-hydroxyisobutyryl)lysine; alternate modification. Lysine 5 carries the N6-(beta-hydroxybutyryl)lysine; alternate modification. Position 5 is an N6-acetyllysine; alternate (lysine 5). Residue lysine 5 is modified to N6-methyllysine; alternate. Glutamine 6 is subject to 5-glutamyl dopamine; alternate. At glutamine 6 the chain carries 5-glutamyl serotonin; alternate. The residue at position 7 (threonine 7) is a Phosphothreonine; by PKC. A Citrulline; alternate modification is found at arginine 9. Arginine 9 is subject to Symmetric dimethylarginine; by PRMT5; alternate. At lysine 10 the chain carries N6,N6,N6-trimethyllysine; alternate. Lysine 10 bears the N6,N6-dimethyllysine; alternate mark. Lysine 10 carries the N6-(2-hydroxyisobutyryl)lysine; alternate modification. Residue lysine 10 is modified to N6-(beta-hydroxybutyryl)lysine; alternate. N6-acetyllysine; alternate is present on lysine 10. Position 10 is an N6-methyllysine; alternate (lysine 10). Lysine 10 carries the post-translational modification N6-lactoyllysine; alternate. Serine 11 is subject to ADP-ribosylserine; alternate. Serine 11 carries the phosphoserine; alternate; by AURKB, AURKC, RPS6KA3, RPS6KA4 and RPS6KA5 modification. Position 12 is a phosphothreonine; by PKC (threonine 12). Lysine 15 is subject to N6-(2-hydroxyisobutyryl)lysine; alternate. Lysine 15 carries the post-translational modification N6-(beta-hydroxybutyryl)lysine; alternate. Lysine 15 bears the N6-acetyllysine; alternate mark. An N6-lactoyllysine; alternate modification is found at lysine 15. Position 15 is an N6-glutaryllysine; alternate (lysine 15). The residue at position 15 (lysine 15) is an N6-succinyllysine; alternate. Arginine 18 is subject to Citrulline; alternate. Arginine 18 carries the asymmetric dimethylarginine; by CARM1; alternate modification. N6-(2-hydroxyisobutyryl)lysine; alternate is present on residues lysine 19 and lysine 24. N6-(beta-hydroxybutyryl)lysine; alternate occurs at positions 19 and 24. Lysine 19 and lysine 24 each carry N6-acetyllysine; alternate. Lysine 19 and lysine 24 each carry N6-methyllysine; alternate. N6-lactoyllysine; alternate is present on residues lysine 19 and lysine 24. N6-glutaryllysine; alternate is present on residues lysine 19 and lysine 24. Residues lysine 19 and lysine 24 each carry the N6-butyryllysine; alternate modification. The residue at position 27 (arginine 27) is a Citrulline. Lysine 28 is subject to N6,N6,N6-trimethyllysine; alternate. N6,N6-dimethyllysine; alternate is present on lysine 28. Lysine 28 carries the N6-(2-hydroxyisobutyryl)lysine; alternate modification. Position 28 is an N6-acetyllysine; alternate (lysine 28). Lysine 28 carries the N6-methyllysine; alternate modification. Lysine 28 carries the post-translational modification N6-lactoyllysine; alternate. An N6-glutaryllysine; alternate modification is found at lysine 28. At serine 29 the chain carries ADP-ribosylserine; alternate. Phosphoserine; alternate; by AURKB, AURKC and RPS6KA5 is present on serine 29. Lysine 37 is subject to N6,N6,N6-trimethyllysine; alternate. N6,N6-dimethyllysine; alternate is present on lysine 37. Residue lysine 37 is modified to N6-(2-hydroxyisobutyryl)lysine; alternate. Residue lysine 37 is modified to N6-acetyllysine; alternate. Residue lysine 37 is modified to N6-methyllysine; alternate. At lysine 38 the chain carries N6-methyllysine. Tyrosine 42 carries the post-translational modification Phosphotyrosine. Lysine 57 is subject to N6,N6,N6-trimethyllysine; alternate. At lysine 57 the chain carries N6-(2-hydroxyisobutyryl)lysine; alternate. The residue at position 57 (lysine 57) is an N6-(beta-hydroxybutyryl)lysine; alternate. Lysine 57 is modified (N6-acetyllysine; alternate). The residue at position 57 (lysine 57) is an N6-lactoyllysine; alternate. Lysine 57 carries the post-translational modification N6-glutaryllysine; alternate. Lysine 57 carries the N6-succinyllysine; alternate modification. Lysine 57 is modified (N6-methyllysine; by EHMT2; alternate). Serine 58 bears the Phosphoserine mark. Residues lysine 65 and lysine 80 each carry the N6-(2-hydroxyisobutyryl)lysine; alternate modification. N6-methyllysine; alternate is present on residues lysine 65 and lysine 80. Lysine 80 carries the post-translational modification N6,N6,N6-trimethyllysine; alternate. Lysine 80 bears the N6,N6-dimethyllysine; alternate mark. Lysine 80 is subject to N6-acetyllysine; alternate. Position 80 is an N6-lactoyllysine; alternate (lysine 80). At lysine 80 the chain carries N6-glutaryllysine; alternate. An N6-succinyllysine; alternate modification is found at lysine 80. Phosphothreonine is present on threonine 81. Serine 87 is modified (phosphoserine). Threonine 108 is modified (phosphothreonine). Residues lysine 116 and lysine 123 each carry the N6-acetyllysine; alternate modification. 2 positions are modified to N6-glutaryllysine; alternate: lysine 116 and lysine 123. Lysine 123 is modified (N6-(2-hydroxyisobutyryl)lysine; alternate). Position 123 is an N6-methyllysine; alternate (lysine 123). Lysine 123 bears the N6-succinyllysine; alternate mark.

This sequence belongs to the histone H3 family. In terms of assembly, the nucleosome is a histone octamer containing two molecules each of H2A, H2B, H3 and H4 assembled in one H3-H4 heterotetramer and two H2A-H2B heterodimers. The octamer wraps approximately 147 bp of DNA. Interacts with TONSL; CHAF1A and CHAF1B. Acetylation is generally linked to gene activation. Acetylation on Lys-10 (H3K9ac) impairs methylation at Arg-9 (H3R8me2s). Acetylation on Lys-19 (H3K18ac) and Lys-24 (H3K24ac) favors methylation at Arg-18 (H3R17me). Acetylation at Lys-123 (H3K122ac) by EP300/p300 plays a central role in chromatin structure: localizes at the surface of the histone octamer and stimulates transcription, possibly by promoting nucleosome instability. In terms of processing, citrullination at Arg-9 (H3R8ci) and/or Arg-18 (H3R17ci) by PADI4 impairs methylation and represses transcription. Post-translationally, asymmetric dimethylation at Arg-18 (H3R17me2a) by CARM1 is linked to gene activation. Symmetric dimethylation at Arg-9 (H3R8me2s) by PRMT5 is linked to gene repression. Asymmetric dimethylation at Arg-3 (H3R2me2a) by PRMT6 is linked to gene repression and is mutually exclusive with H3 Lys-5 methylation (H3K4me2 and H3K4me3). H3R2me2a is present at the 3' of genes regardless of their transcription state and is enriched on inactive promoters, while it is absent on active promoters. Methylation at Lys-5 (H3K4me), Lys-37 (H3K36me) and Lys-80 (H3K79me) are linked to gene activation. Methylation at Lys-5 (H3K4me) facilitates subsequent acetylation of H3 and H4. Methylation at Lys-80 (H3K79me) is associated with DNA double-strand break (DSB) responses and is a specific target for TP53BP1. Methylation at Lys-10 (H3K9me) and Lys-28 (H3K27me) are linked to gene repression. Methylation at Lys-10 (H3K9me) is a specific target for HP1 proteins (CBX1, CBX3 and CBX5) and prevents subsequent phosphorylation at Ser-11 (H3S10ph) and acetylation of H3 and H4. Methylation at Lys-5 (H3K4me) and Lys-80 (H3K79me) require preliminary monoubiquitination of H2B at 'Lys-120'. Methylation at Lys-10 (H3K9me) and Lys-28 (H3K27me) are enriched in inactive X chromosome chromatin. Monomethylation at Lys-57 (H3K56me1) by EHMT2/G9A in G1 phase promotes interaction with PCNA and is required for DNA replication. In terms of processing, phosphorylated at Thr-4 (H3T3ph) by HASPIN during prophase and dephosphorylated during anaphase. Phosphorylation at Ser-11 (H3S10ph) by AURKB is crucial for chromosome condensation and cell-cycle progression during mitosis and meiosis. In addition phosphorylation at Ser-11 (H3S10ph) by RPS6KA4 and RPS6KA5 is important during interphase because it enables the transcription of genes following external stimulation, like mitogens, stress, growth factors or UV irradiation and result in the activation of genes, such as c-fos and c-jun. Phosphorylation at Ser-11 (H3S10ph), which is linked to gene activation, prevents methylation at Lys-10 (H3K9me) but facilitates acetylation of H3 and H4. Phosphorylation at Ser-11 (H3S10ph) by AURKB mediates the dissociation of HP1 proteins (CBX1, CBX3 and CBX5) from heterochromatin. Phosphorylation at Ser-11 (H3S10ph) is also an essential regulatory mechanism for neoplastic cell transformation. Phosphorylated at Ser-29 (H3S28ph) by MAP3K20 isoform 1, RPS6KA5 or AURKB during mitosis or upon ultraviolet B irradiation. Phosphorylation at Thr-7 (H3T6ph) by PRKCB is a specific tag for epigenetic transcriptional activation that prevents demethylation of Lys-5 (H3K4me) by LSD1/KDM1A. At centromeres, specifically phosphorylated at Thr-12 (H3T11ph) from prophase to early anaphase, by DAPK3 and PKN1. Phosphorylation at Thr-12 (H3T11ph) by PKN1 or isoform M2 of PKM (PKM2) is a specific tag for epigenetic transcriptional activation that promotes demethylation of Lys-10 (H3K9me) by KDM4C/JMJD2C. Phosphorylation at Tyr-42 (H3Y41ph) by JAK2 promotes exclusion of CBX5 (HP1 alpha) from chromatin. Post-translationally, ubiquitinated. Lysine deamination at Lys-5 (H3K4all) to form allysine is mediated by LOXL2. Allysine formation by LOXL2 only takes place on H3K4me3 and results in gene repression. In terms of processing, butyrylation of histones marks active promoters and competes with histone acetylation. It is present during late spermatogenesis. Post-translationally, succinylation at Lys-80 (H3K79succ) by KAT2A takes place with a maximum frequency around the transcription start sites of genes. It gives a specific tag for epigenetic transcription activation. Desuccinylation at Lys-123 (H3K122succ) by SIRT7 in response to DNA damage promotes chromatin condensation and double-strand breaks (DSBs) repair. Serine ADP-ribosylation constitutes the primary form of ADP-ribosylation of proteins in response to DNA damage. Serine ADP-ribosylation at Ser-11 (H3S10ADPr) is mutually exclusive with phosphorylation at Ser-11 (H3S10ph) and impairs acetylation at Lys-10 (H3K9ac). Expressed in testicular cells.

The protein localises to the nucleus. The protein resides in the chromosome. Functionally, core component of nucleosome. Nucleosomes wrap and compact DNA into chromatin, limiting DNA accessibility to the cellular machineries which require DNA as a template. Histones thereby play a central role in transcription regulation, DNA repair, DNA replication and chromosomal stability. DNA accessibility is regulated via a complex set of post-translational modifications of histones, also called histone code, and nucleosome remodeling. The polypeptide is Histone H3.1t (Homo sapiens (Human)).